The sequence spans 233 residues: Aspartate/glutamate leucyltransferase (233 aa).

Belongs to the R-transferase family. Bpt subfamily.

It is found in the cytoplasm. The catalysed reaction is N-terminal L-glutamyl-[protein] + L-leucyl-tRNA(Leu) = N-terminal L-leucyl-L-glutamyl-[protein] + tRNA(Leu) + H(+). The enzyme catalyses N-terminal L-aspartyl-[protein] + L-leucyl-tRNA(Leu) = N-terminal L-leucyl-L-aspartyl-[protein] + tRNA(Leu) + H(+). In terms of biological role, functions in the N-end rule pathway of protein degradation where it conjugates Leu from its aminoacyl-tRNA to the N-termini of proteins containing an N-terminal aspartate or glutamate. This is Aspartate/glutamate leucyltransferase from Vibrio cholerae serotype O1 (strain ATCC 39315 / El Tor Inaba N16961).